A 137-amino-acid chain; its full sequence is Small ribosomal subunit protein uS9 (137 aa).

Residues aspartate 114–arginine 137 are disordered. Residues lysine 118–arginine 137 are compositionally biased toward basic residues.

The protein belongs to the universal ribosomal protein uS9 family.

This is Small ribosomal subunit protein uS9 from Rhodopirellula baltica (strain DSM 10527 / NCIMB 13988 / SH1).